A 189-amino-acid polypeptide reads, in one-letter code: Crossover junction endodeoxyribonuclease RuvC (189 aa).

Catalysis depends on residues aspartate 7, glutamate 68, and aspartate 141. Mg(2+) is bound by residues aspartate 7, glutamate 68, and aspartate 141.

It belongs to the RuvC family. Homodimer which binds Holliday junction (HJ) DNA. The HJ becomes 2-fold symmetrical on binding to RuvC with unstacked arms; it has a different conformation from HJ DNA in complex with RuvA. In the full resolvosome a probable DNA-RuvA(4)-RuvB(12)-RuvC(2) complex forms which resolves the HJ. Mg(2+) is required as a cofactor.

It is found in the cytoplasm. It catalyses the reaction Endonucleolytic cleavage at a junction such as a reciprocal single-stranded crossover between two homologous DNA duplexes (Holliday junction).. Functionally, the RuvA-RuvB-RuvC complex processes Holliday junction (HJ) DNA during genetic recombination and DNA repair. Endonuclease that resolves HJ intermediates. Cleaves cruciform DNA by making single-stranded nicks across the HJ at symmetrical positions within the homologous arms, yielding a 5'-phosphate and a 3'-hydroxyl group; requires a central core of homology in the junction. The consensus cleavage sequence is 5'-(A/T)TT(C/G)-3'. Cleavage occurs on the 3'-side of the TT dinucleotide at the point of strand exchange. HJ branch migration catalyzed by RuvA-RuvB allows RuvC to scan DNA until it finds its consensus sequence, where it cleaves and resolves the cruciform DNA. This Rhodococcus opacus (strain B4) protein is Crossover junction endodeoxyribonuclease RuvC.